Reading from the N-terminus, the 451-residue chain is Trigger factor (451 aa).

One can recognise a PPIase FKBP-type domain in the interval 165 to 250 (DDKLTIDFEG…LHQIQAREML (86 aa)).

The protein belongs to the FKBP-type PPIase family. Tig subfamily.

The protein resides in the cytoplasm. The enzyme catalyses [protein]-peptidylproline (omega=180) = [protein]-peptidylproline (omega=0). Its function is as follows. Involved in protein export. Acts as a chaperone by maintaining the newly synthesized protein in an open conformation. Functions as a peptidyl-prolyl cis-trans isomerase. The sequence is that of Trigger factor (tig) from Helicobacter pylori (strain ATCC 700392 / 26695) (Campylobacter pylori).